The sequence spans 811 residues: Phosphoinositide 3-kinase adapter protein 1 (811 aa).

The TIR domain occupies 8 to 146 (RGCDILIFYS…AVRKAISEDS (139 aa)). The segment at 10–145 (CDILIFYSPD…AAVRKAISED (136 aa)) is necessary and sufficient to mediate inhibition of NF-kappa-B downstream of activated TLRs; may mediate interaction with MYD88 and TIRAP. The interval 146–169 (SGCDSVTDTEPEDERELPFSKQTN) is disordered. Positions 182-318 (VQPDRIRCGA…NIPASGLHLF (137 aa)) constitute a DBB domain. Tyrosine 264 carries the post-translational modification Phosphotyrosine. Tyrosine 420, tyrosine 445, and tyrosine 460 each carry phosphotyrosine; by SYK. Phosphotyrosine; by ABL1 is present on tyrosine 513. Residues 525–551 (DLANRPPVPVPRPEASAPGPPPPPDNE) are disordered. Residues 530 to 550 (PPVPVPRPEASAPGPPPPPDN) show a composition bias toward pro residues. 3 positions are modified to phosphotyrosine; by ABL1: tyrosine 553, tyrosine 570, and tyrosine 594. Serine 642 bears the Phosphoserine mark. Phosphotyrosine; by ABL1 is present on tyrosine 694. The disordered stretch occupies residues 702–811 (VLPARTELRR…PPPPVPPRGR (110 aa)). Basic and acidic residues predominate over residues 707-716 (TELRRGDWKT). The segment covering 717 to 740 (DSMSSTASSTSNRSSTRSLLSVSS) has biased composition (low complexity). The residue at position 718 (serine 718) is a Phosphoserine. Pro residues predominate over residues 801 to 811 (HPPPPVPPRGR).

As to quaternary structure, homooligomer. Interacts (phosphorylated on tyrosine residues within YXXM motifs) with PIK3R1 (via SH2 domain); required for BCR- and TLR-mediated activation of phosphoinositide 3-kinase. Interacts (via polyproline C-terminal region) with ABI1 (via SH3 domain); the interaction promotes phosphorylation of PIK3AP1 by ABL1. May interact with MYD88 and TIRAP. In terms of processing, constitutively phosphorylated. Phosphorylated on tyrosine residues in C-terminal region by ABL1. Phosphorylated on tyrosine residues within the YXXM motifs by BTK and SYK. Isoform 1 and isoform 2 are phosphorylated on tyrosine residues, most likely within the YXXM motifs, via CD19 activation. Toll-like receptor activation induces appearance of a phosphorylated form associated with membranes. In terms of tissue distribution, predominantly expressed in spleen (at protein level). Expressed at lower levels in thymus, liver and lung. Expressed in B-cells, macrophages and natural killer (NK) cells.

Its subcellular location is the cytoplasm. It is found in the cell membrane. Signaling adapter that contributes to B-cell development by linking B-cell receptor (BCR) signaling to the phosphoinositide 3-kinase (PI3K)-Akt signaling pathway. Has a complementary role to the BCR coreceptor CD19, coupling BCR and PI3K activation by providing a docking site for the PI3K subunit PIK3R1. Alternatively, links Toll-like receptor (TLR) signaling to PI3K activation, a process preventing excessive inflammatory cytokine production. Also involved in the activation of PI3K in natural killer cells. May be involved in the survival of mature B-cells via activation of REL. The sequence is that of Phosphoinositide 3-kinase adapter protein 1 (Pik3ap1) from Mus musculus (Mouse).